The chain runs to 390 residues: NADH-quinone oxidoreductase subunit D (390 aa).

Belongs to the complex I 49 kDa subunit family. NDH-1 is composed of 14 different subunits. Subunits NuoB, C, D, E, F, and G constitute the peripheral sector of the complex.

It is found in the cell inner membrane. It catalyses the reaction a quinone + NADH + 5 H(+)(in) = a quinol + NAD(+) + 4 H(+)(out). NDH-1 shuttles electrons from NADH, via FMN and iron-sulfur (Fe-S) centers, to quinones in the respiratory chain. The immediate electron acceptor for the enzyme in this species is believed to be ubiquinone. Couples the redox reaction to proton translocation (for every two electrons transferred, four hydrogen ions are translocated across the cytoplasmic membrane), and thus conserves the redox energy in a proton gradient. The polypeptide is NADH-quinone oxidoreductase subunit D (Geobacter sulfurreducens (strain ATCC 51573 / DSM 12127 / PCA)).